Here is a 158-residue protein sequence, read N- to C-terminus: Cyclic pyranopterin monophosphate synthase (158 aa).

Substrate-binding positions include 74-76 (MCH) and 112-113 (ME). Asp-127 is a catalytic residue.

Belongs to the MoaC family. As to quaternary structure, homohexamer; trimer of dimers.

The catalysed reaction is (8S)-3',8-cyclo-7,8-dihydroguanosine 5'-triphosphate = cyclic pyranopterin phosphate + diphosphate. It functions in the pathway cofactor biosynthesis; molybdopterin biosynthesis. Functionally, catalyzes the conversion of (8S)-3',8-cyclo-7,8-dihydroguanosine 5'-triphosphate to cyclic pyranopterin monophosphate (cPMP). The sequence is that of Cyclic pyranopterin monophosphate synthase from Helicobacter pylori (strain Shi470).